The sequence spans 307 residues: Universal stress protein A family protein C25B2.10 (307 aa).

A disordered region spans residues 1–63; it reads MSESAPAGSK…RSSMEQPTFR (63 aa). The segment covering 21–30 has biased composition (basic and acidic residues); the sequence is PEPRTSKDQQ. Position 44 is a phosphoserine (S44). At T48 the chain carries Phosphothreonine. Phosphoserine is present on residues S98 and S102.

Belongs to the universal stress protein A family.

The protein resides in the barrier septum. The protein localises to the cell tip. The polypeptide is Universal stress protein A family protein C25B2.10 (Schizosaccharomyces pombe (strain 972 / ATCC 24843) (Fission yeast)).